Reading from the N-terminus, the 267-residue chain is Phosphate import ATP-binding protein PstB (267 aa).

The 242-residue stretch at 21–262 folds into the ABC transporter domain; that stretch reads IEVKNLNFYY…PREKRTQDYI (242 aa). Position 53-60 (53-60) interacts with ATP; that stretch reads GPSGCGKS.

This sequence belongs to the ABC transporter superfamily. Phosphate importer (TC 3.A.1.7) family. As to quaternary structure, the complex is composed of two ATP-binding proteins (PstB), two transmembrane proteins (PstC and PstA) and a solute-binding protein (PstS).

Its subcellular location is the cell inner membrane. It catalyses the reaction phosphate(out) + ATP + H2O = ADP + 2 phosphate(in) + H(+). Functionally, part of the ABC transporter complex PstSACB involved in phosphate import. Responsible for energy coupling to the transport system. The chain is Phosphate import ATP-binding protein PstB from Mesorhizobium japonicum (strain LMG 29417 / CECT 9101 / MAFF 303099) (Mesorhizobium loti (strain MAFF 303099)).